Consider the following 123-residue polypeptide: Large ribosomal subunit protein uL29 (123 aa).

It belongs to the universal ribosomal protein uL29 family. Component of the large ribosomal subunit.

The protein localises to the cytoplasm. Component of the large ribosomal subunit. The ribosome is a large ribonucleoprotein complex responsible for the synthesis of proteins in the cell. In Xenopus tropicalis (Western clawed frog), this protein is Large ribosomal subunit protein uL29 (rpl35).